Here is a 406-residue protein sequence, read N- to C-terminus: Tryptophan synthase beta chain (406 aa).

Residue K99 is modified to N6-(pyridoxal phosphate)lysine.

Belongs to the TrpB family. In terms of assembly, tetramer of two alpha and two beta chains. Pyridoxal 5'-phosphate serves as cofactor.

It catalyses the reaction (1S,2R)-1-C-(indol-3-yl)glycerol 3-phosphate + L-serine = D-glyceraldehyde 3-phosphate + L-tryptophan + H2O. The protein operates within amino-acid biosynthesis; L-tryptophan biosynthesis; L-tryptophan from chorismate: step 5/5. The beta subunit is responsible for the synthesis of L-tryptophan from indole and L-serine. This Phenylobacterium zucineum (strain HLK1) protein is Tryptophan synthase beta chain.